The primary structure comprises 310 residues: 4-hydroxyproline 2-epimerase (310 aa).

The active-site Proton acceptor is the C88. Residues 89–90 (GH), H208, and D232 each bind substrate. C236 serves as the catalytic Proton donor. 237–238 (GT) serves as a coordination point for substrate.

This sequence belongs to the proline racemase family.

It catalyses the reaction trans-4-hydroxy-L-proline = cis-4-hydroxy-D-proline. Its function is as follows. Catalyzes the epimerization of trans-4-hydroxy-L-proline (t4LHyp) to cis-4-hydroxy-D-proline (c4DHyp). Is likely involved in a degradation pathway that converts t4LHyp to alpha-ketoglutarate. Displays no proline racemase activity. In Burkholderia cenocepacia (strain ATCC BAA-245 / DSM 16553 / LMG 16656 / NCTC 13227 / J2315 / CF5610) (Burkholderia cepacia (strain J2315)), this protein is 4-hydroxyproline 2-epimerase.